Consider the following 435-residue polypeptide: Ras association domain-containing protein 9 (435 aa).

Residues 1 to 22 form a disordered region; the sequence is MAPFGRNLLKTRHKNRSPTKDM. Positions 25 to 119 constitute a Ras-associating domain; that stretch reads EEKEIVVWVC…MQFVLVKADA (95 aa). The stretch at 195-290 forms a coiled coil; it reads HTIHQQVKRM…DKLSAEIEKE (96 aa). The tract at residues 380 to 435 is disordered; it reads NRAKESEVPSSNGEIPPFTQRVFSNYTNDTDSDTGISSNHSQDSETTVGDVVLLST. A compositionally biased stretch (polar residues) spans 400–426; sequence RVFSNYTNDTDSDTGISSNHSQDSETT.

Interacts with PAM.

The protein resides in the endosome. In terms of biological role, may play a role in regulating vesicuar trafficking in cells. The polypeptide is Ras association domain-containing protein 9 (RASSF9) (Homo sapiens (Human)).